The sequence spans 350 residues: Inhibin beta E chain (350 aa).

An N-terminal signal peptide occupies residues 1–19 (MRLPDVQLWLVLLWALVRA). The propeptide occupies 20–236 (QGTGSVCPSC…EPGAGRARRR (217 aa)). N198 is a glycosylation site (N-linked (GlcNAc...) asparagine). Disulfide bonds link C240–C248, C247–C315, C276–C347, and C280–C349.

The protein belongs to the TGF-beta family. In terms of assembly, homodimeric or heterodimeric through association with alpha and beta subunits, linked by one or more disulfide bonds. Inhibins are heterodimers of one alpha and one beta subunit. Activins are homo- or heterodimers of beta subunits only.

It is found in the secreted. In terms of biological role, inhibins and activins inhibit and activate, respectively, the secretion of follitropin by the pituitary gland. Inhibins/activins are involved in regulating a number of diverse functions such as hypothalamic and pituitary hormone secretion, gonadal hormone secretion, germ cell development and maturation, erythroid differentiation, insulin secretion, nerve cell survival, embryonic axial development or bone growth, depending on their subunit composition. Inhibins appear to oppose the functions of activins. Its function is as follows. Activin E is a homodimer of INHBE secreted by the liver that plays a crucial role in regulating metabolic homeostasis particularly in lipid metabolism and energy homeostasis. Plays a central role in the regulation of adipose tissue lipolysis by preventing the influx of fatty acids from adipose tissue into the liver. Mechanistically, signals via ACVR1C to activate SMAD2/3 signaling, suppressing PPARG target genes in adipose tissue, thereby reducing liver lipid content and improving glycemic control. Induces beige adipocyte formation and thermogenesis in response to cold exposure. In Homo sapiens (Human), this protein is Inhibin beta E chain (INHBE).